Here is a 198-residue protein sequence, read N- to C-terminus: Inner membrane-spanning protein YciB (198 aa).

5 helical membrane-spanning segments follow: residues 36–56 (IYSATAMLIISSLVVYGALFI), 67–87 (LTLIACLVFGSLTLAFHSETF), 90–110 (WKAPVVNWLFALAFIGSHFIG), 135–155 (IAWIAFFLFCGAANLFVAFTF), and 162–182 (FKVFGSLGMTVLFLVGQGIYL).

The protein belongs to the YciB family.

Its subcellular location is the cell inner membrane. Its function is as follows. Plays a role in cell envelope biogenesis, maintenance of cell envelope integrity and membrane homeostasis. The polypeptide is Inner membrane-spanning protein YciB (Pseudomonas fluorescens (strain Pf0-1)).